We begin with the raw amino-acid sequence, 449 residues long: Naphthalene 1,2-dioxygenase system, large oxygenase component (449 aa).

Residues 39–137 form the Rieske domain; the sequence is WLFLTHDSLI…LDKKCMGLKE (99 aa). The [2Fe-2S] cluster site is built by C81, H83, C101, and H104. H208, H213, and D362 together coordinate Fe cation.

The protein belongs to the bacterial ring-hydroxylating dioxygenase alpha subunit family. In terms of assembly, the naphthalene dioxygenase (NDO) multicomponent enzyme system is composed of an electron transfer component and a dioxygenase component (iron sulfur protein (ISP)). The electron transfer component is composed of a ferredoxin reductase (NdoR) and a ferredoxin (NdoA), and the dioxygenase component is formed of a heterohexamer (trimer of heterodimers) of three large alpha subunits (NdoB) and three small beta subunits (NdoC). The cofactor is [2Fe-2S] cluster. It depends on Fe(2+) as a cofactor.

The enzyme catalyses naphthalene + NADH + O2 + H(+) = (1R,2S)-1,2-dihydronaphthalene-1,2-diol + NAD(+). It participates in aromatic compound metabolism; naphthalene degradation. In terms of biological role, component of the naphthalene dioxygenase (NDO) multicomponent enzyme system which catalyzes the incorporation of both atoms of molecular oxygen into naphthalene to form cis-(1R,2S)-dihydroxy-1,2-dihydronaphthalene. The alpha subunit has a catalytic role in the holoenzyme. The protein is Naphthalene 1,2-dioxygenase system, large oxygenase component of Pseudomonas aeruginosa.